The following is a 388-amino-acid chain: Glycoprotein-N-acetylgalactosamine 3-beta-galactosyltransferase 1 (388 aa).

The Cytoplasmic segment spans residues 1 to 12 (MAPISHYIGKTS). The chain crosses the membrane as a helical; Signal-anchor for type II membrane protein span at residues 13 to 30 (LTTLAIGIAIGITVSNIV). Residues 31 to 388 (KFSSTQRRHF…LAQTDSKHIS (358 aa)) are Lumenal-facing. The tract at residues 43–65 (SGYIPDSPHSHGENDFVEGPDDS) is disordered. N-linked (GlcNAc...) asparagine glycosylation is present at Asn-80. Cys-95 and Cys-119 are disulfide-bonded. UDP-binding residues include Met-98, Asn-100, Glu-142, Gly-143, Arg-144, Lys-150, and Asp-173. Mn(2+) is bound by residues Asp-173 and Asp-175. Cys-238 and Cys-253 form a disulfide bridge. Trp-292 is a binding site for a glycoprotein. A disulfide bridge links Cys-307 with Cys-308. The UDP site is built by His-316 and Tyr-317. Residue His-316 coordinates Mn(2+). The segment at 344–388 (STEEQDHGSSHKDTDAMKPEGKGMEDKEDEETNISLAQTDSKHIS) is disordered. Residues 347–368 (EQDHGSSHKDTDAMKPEGKGME) are compositionally biased toward basic and acidic residues. The N-linked (GlcNAc...) asparagine glycan is linked to Asn-376.

This sequence belongs to the glycosyltransferase 31 family. Beta3-Gal-T subfamily. Homodimer; disulfide-linked. The cofactor is Mn(2+).

The protein resides in the membrane. It catalyses the reaction an N-acetyl-alpha-D-galactosaminyl derivative + UDP-alpha-D-galactose = a beta-D-galactosyl-(1-&gt;3)-N-acetyl-alpha-D-galactosaminyl derivative + UDP + H(+). It functions in the pathway protein modification; protein glycosylation. In terms of biological role, glycosyltransferase that generates the core 1 O-glycan Gal-beta1-3GalNAc-alpha1-Ser/Thr (T antigen), which is a precursor for many extended O-glycans in glycoproteins. This is Glycoprotein-N-acetylgalactosamine 3-beta-galactosyltransferase 1 from Biomphalaria glabrata (Bloodfluke planorb).